A 338-amino-acid polypeptide reads, in one-letter code: Phosphoribosylformylglycinamidine cyclo-ligase (338 aa).

The protein belongs to the AIR synthase family.

It is found in the cytoplasm. It catalyses the reaction 2-formamido-N(1)-(5-O-phospho-beta-D-ribosyl)acetamidine + ATP = 5-amino-1-(5-phospho-beta-D-ribosyl)imidazole + ADP + phosphate + H(+). The protein operates within purine metabolism; IMP biosynthesis via de novo pathway; 5-amino-1-(5-phospho-D-ribosyl)imidazole from N(2)-formyl-N(1)-(5-phospho-D-ribosyl)glycinamide: step 2/2. In Lactococcus lactis subsp. lactis (strain IL1403) (Streptococcus lactis), this protein is Phosphoribosylformylglycinamidine cyclo-ligase.